A 95-amino-acid polypeptide reads, in one-letter code: Aspartyl/glutamyl-tRNA(Asn/Gln) amidotransferase subunit C (95 aa).

The protein belongs to the GatC family. Heterotrimer of A, B and C subunits.

The enzyme catalyses L-glutamyl-tRNA(Gln) + L-glutamine + ATP + H2O = L-glutaminyl-tRNA(Gln) + L-glutamate + ADP + phosphate + H(+). It carries out the reaction L-aspartyl-tRNA(Asn) + L-glutamine + ATP + H2O = L-asparaginyl-tRNA(Asn) + L-glutamate + ADP + phosphate + 2 H(+). Functionally, allows the formation of correctly charged Asn-tRNA(Asn) or Gln-tRNA(Gln) through the transamidation of misacylated Asp-tRNA(Asn) or Glu-tRNA(Gln) in organisms which lack either or both of asparaginyl-tRNA or glutaminyl-tRNA synthetases. The reaction takes place in the presence of glutamine and ATP through an activated phospho-Asp-tRNA(Asn) or phospho-Glu-tRNA(Gln). This chain is Aspartyl/glutamyl-tRNA(Asn/Gln) amidotransferase subunit C, found in Nitratidesulfovibrio vulgaris (strain DSM 19637 / Miyazaki F) (Desulfovibrio vulgaris).